The primary structure comprises 659 residues: Exocyst complex component 5 (659 aa).

The stretch at M1 to H58 forms a coiled coil.

Belongs to the SEC10 family. As to quaternary structure, the exocyst complex is composed of sec-3/exoc1, sec-5/exoc2, sec-6/exoc3, sec-8/exoc4, sec-10/exoc5, sec-15/exoc6, exo-70/exoc7 and exo-84/exoc8.

Its function is as follows. Component of the exocyst complex involved in the docking of exocytic vesicles with fusion sites on the plasma membrane. The chain is Exocyst complex component 5 (sec-10) from Caenorhabditis elegans.